Here is an 82-residue protein sequence, read N- to C-terminus: MAVFHDEVEIEDFQYDEDSETYFYPCPCGDNFSITKEDLENGEDVATCPSCSLIIKVIYDKDQFMCGETVPAPSTNKELVKC.

In terms of domain architecture, DPH-type MB spans 4-60 (FHDEVEIEDFQYDEDSETYFYPCPCGDNFSITKEDLENGEDVATCPSCSLIIKVIYD). Fe cation is bound by residues Cys26, Cys28, Cys48, and Cys51.

Belongs to the DPH3 family. As to quaternary structure, component of the 2-(3-amino-3-carboxypropyl)histidine synthase complex composed of DPH1, DPH2, DPH3 and a NADH-dependent reductase. Interacts with SERGEF. Fe(2+) is required as a cofactor.

It localises to the cytoplasm. The protein localises to the nucleus. The catalysed reaction is [3Fe-4S](1+)-[protein] + Fe(2+)-[Dph3] = [3Fe-4S](0)-[protein] + Fe(3+)-[Dph3]. The enzyme catalyses 2 [3Fe-4S](0)-[protein] + 2 Fe(2+)-[Dph3] + NADH = 2 [4Fe-4S](1+)-[protein] + 2 [Dph3] + NAD(+) + H(+). It participates in protein modification; peptidyl-diphthamide biosynthesis. Functionally, required for the first step of diphthamide biosynthesis, a post-translational modification of histidine which occurs in elongation factor 2. DPH1 and DPH2 transfer a 3-amino-3-carboxypropyl (ACP) group from S-adenosyl-L-methionine (SAM) to a histidine residue, the reaction is assisted by a reduction system comprising DPH3 and a NADH-dependent reductase. Acts as an electron donor to reduce the Fe-S cluster in DPH1-DPH2 keeping the [4Fe-4S] clusters in the active and reduced state. Restores iron to DPH1-DPH2 iron-sulfur clusters which have degraded from [4Fe-4S] to [3Fe-4S] by donating an iron atom to reform [4Fe-4S] clusters, in a manner dependent on the presence of elongation factor 2 and SAM. Associates with the elongator complex and is required for tRNA Wobble base modifications mediated by the elongator complex. The elongator complex is required for multiple tRNA modifications, including mcm5U (5-methoxycarbonylmethyl uridine), mcm5s 2U (5-methoxycarbonylmethyl-2-thiouridine), and ncm5U (5-carbamoylmethyl uridine). This Cricetulus griseus (Chinese hamster) protein is Diphthamide biosynthesis protein 3 (DPH3).